The primary structure comprises 230 residues: Gilatoxin (230 aa).

Residues 1-230 (IIGGQECDET…ISFLFWIQSI (230 aa)) enclose the Peptidase S1 domain. Intrachain disulfides connect Cys7–Cys146, Cys26–Cys42, Cys125–Cys193, Cys157–Cys172, and Cys183–Cys208. His41 functions as the Charge relay system in the catalytic mechanism. An N-linked (GlcNAc...) asparagine glycan is attached at Asn84. Asp93 serves as the catalytic Charge relay system. The active-site Charge relay system is Ser187.

Belongs to the peptidase S1 family. Extensively glycosylated, contains approximately 8 mol of monosaccharide per mol of toxin. Expressed by the mandibular venom gland.

It localises to the secreted. Has kallikrein-like activity, releases bradykinin from kininogen. Catalyzes the hydrolysis of various arginine ester substrates for trypsin and thrombin and degrades both angiotensin I and II by cleavage of the dipeptide Asp-Arg from the NH2-terminal end. Fibrinogen is also degraded but a fibrin clot is not produced. May have a potentiating effect on potent hemorrhagic toxins present in the venom. This is Gilatoxin from Heloderma horridum horridum (Mexican beaded lizard).